We begin with the raw amino-acid sequence, 536 residues long: MVGASLGPPGRGSLSRLIRLVICVLTLCALSVQGRSESTEGHSKDLLYKYKLYGDIDEYAYYFLDIDIGTPEQRISLILDTGSSSLSFPCAGCKNCGVHMENPFNLNNSKTSSILYCENEECPFKLNCVKGKCEYMQSYCEGSQISGFYFSDVVSVVSYNNERVTFRKLMGCHMHEESLFLYQQATGVLGMSLSKPQGIPTFVNLLFDNAPQLKQVFTICISENGGELIAGGYDPAYIVRRGGSKSVSGQGSGPVSESLSESGEDPQVALREAEKVVWENVTRKYYYYIKVRGLDMFGTNMMSSSKGLEMLVDSGSTFTHIPEDLYNKLNYFFDILCIQDMNNAYDVNKRLKMTNESFNNPLVQFDDFRKSLKSIIAKENMCVKIVDGVQCWKYLEGLPDLFVTLSNNYKMKWQPHSYLYKKESFWCKGIEKQVNNKPILGLTFFKNRQVIFDIQKNRIGFVDANCPSHPTHTRPRTYNEYKRKDNIFLKIPFFYLYSLFVVFALSVLLSLVFYVRRLYHMEYSPLPSEGKAPADA.

A signal peptide spans 1–34 (MVGASLGPPGRGSLSRLIRLVICVLTLCALSVQG). Over 35 to 492 (RSESTEGHSK…RKDNIFLKIP (458 aa)) the chain is Lumenal. Positions 62 to 462 (YFLDIDIGTP…DIQKNRIGFV (401 aa)) constitute a Peptidase A1 domain. The active site involves Asp-80. Disulfide bonds link Cys-90–Cys-172, Cys-93–Cys-96, Cys-117–Cys-128, Cys-122–Cys-133, Cys-220–Cys-466, Cys-337–Cys-382, and Cys-391–Cys-427. Residues 244–258 (SKSVSGQGSGPVSES) show a composition bias toward low complexity. Positions 244–264 (SKSVSGQGSGPVSESLSESGE) are disordered. Asp-313 is a catalytic residue. A helical membrane pass occupies residues 493–513 (FFYLYSLFVVFALSVLLSLVF). The Cytoplasmic portion of the chain corresponds to 514–536 (YVRRLYHMEYSPLPSEGKAPADA).

It belongs to the peptidase A1 family. As to quaternary structure, component of a complex composed of SPC25 and PMV; the interaction is mediated via the transmembrane domains. The complex interacts with the SEC61 channel-forming translocon complex and is involved in the recognition and import of PEXEL motif-containing proteins into the ER for subsequent export. It is not clear if the zymogen has a cleavable propeptide. Cleavage of the putative propeptide is dispensable for catalytic activity.

Its subcellular location is the endoplasmic reticulum membrane. With respect to regulation, inhibited by peptidomimetic inhibitors such as WEHI-842. Its function is as follows. During the asexual blood stage, plays an essential role in the export of several proteins into the host erythrocytes by cleaving the pentameric localization motif RxLxE/Q/D (termed Plasmodium export element (PEXEL)) located downstream of the N-terminal secretory signal sequence. Specifically, cleaves after the leucine residue in the RxLxE/Q/D (or RxLxxE) motif of exported proteins including EMP1. Also, by regulating protein export, plays an essential role in gametocyte development and thus parasite transmission to the mosquito vector. This Plasmodium vivax (strain Salvador I) protein is Plasmepsin V.